We begin with the raw amino-acid sequence, 382 residues long: Secreted triacylglycerol lipase LIP5 (382 aa).

Residues cysteine 40 and cysteine 211 are joined by a disulfide bond. An N-linked (GlcNAc...) asparagine glycan is attached at asparagine 115. Serine 124 (nucleophile) is an active-site residue. 2 N-linked (GlcNAc...) asparagine glycosylation sites follow: asparagine 157 and asparagine 232. Active-site residues include aspartate 271 and histidine 305. N-linked (GlcNAc...) asparagine glycosylation is present at asparagine 346.

This sequence belongs to the AB hydrolase superfamily. Lipase family. Class Lip subfamily.

The protein localises to the secreted. The catalysed reaction is a triacylglycerol + H2O = a diacylglycerol + a fatty acid + H(+). It carries out the reaction a monoacylglycerol + H2O = glycerol + a fatty acid + H(+). It catalyses the reaction a diacylglycerol + H2O = a monoacylglycerol + a fatty acid + H(+). Functionally, secreted lipase that hydrolyzes acylglycerol lipids such as triacylglycerols and consequently releases free fatty acid. Can hydrolyze 4-nitrophenyl palmitate to release 4-nitrophenol and palmitoic acid. Due to an absence of fatty acid synthase genes in Malassezia species, secretory lipases are essential for the yeast to generate free fatty acids from degradation of sebum and assimilate them as lipid sources for growth. Plays important roles not only in lipid metabolism but also in the immune response of host cells and pathogenesis. This is Secreted triacylglycerol lipase LIP5 from Malassezia furfur (Pityriasis versicolor infection agent).